Consider the following 209-residue polypeptide: Large ribosomal subunit protein uL3 (209 aa).

This sequence belongs to the universal ribosomal protein uL3 family. As to quaternary structure, part of the 50S ribosomal subunit. Forms a cluster with proteins L14 and L19.

Its function is as follows. One of the primary rRNA binding proteins, it binds directly near the 3'-end of the 23S rRNA, where it nucleates assembly of the 50S subunit. This Moorella thermoacetica (strain ATCC 39073 / JCM 9320) protein is Large ribosomal subunit protein uL3.